A 79-amino-acid polypeptide reads, in one-letter code: Acyl carrier protein (79 aa).

The region spanning 2 to 77 (SDIADKVKKI…DAIDYIEKQK (76 aa)) is the Carrier domain. An O-(pantetheine 4'-phosphoryl)serine modification is found at Ser-37.

This sequence belongs to the acyl carrier protein (ACP) family. Post-translationally, 4'-phosphopantetheine is transferred from CoA to a specific serine of apo-ACP by AcpS. This modification is essential for activity because fatty acids are bound in thioester linkage to the sulfhydryl of the prosthetic group.

It is found in the cytoplasm. Its pathway is lipid metabolism; fatty acid biosynthesis. Functionally, carrier of the growing fatty acid chain in fatty acid biosynthesis. The sequence is that of Acyl carrier protein from Gluconobacter oxydans (strain 621H) (Gluconobacter suboxydans).